The sequence spans 488 residues: N-succinylglutamate 5-semialdehyde dehydrogenase (488 aa).

221–226 (GSSRTG) serves as a coordination point for NAD(+). Residues Glu244 and Cys278 contribute to the active site.

This sequence belongs to the aldehyde dehydrogenase family. AstD subfamily.

It catalyses the reaction N-succinyl-L-glutamate 5-semialdehyde + NAD(+) + H2O = N-succinyl-L-glutamate + NADH + 2 H(+). It functions in the pathway amino-acid degradation; L-arginine degradation via AST pathway; L-glutamate and succinate from L-arginine: step 4/5. Its function is as follows. Catalyzes the NAD-dependent reduction of succinylglutamate semialdehyde into succinylglutamate. This is N-succinylglutamate 5-semialdehyde dehydrogenase from Pseudomonas fluorescens (strain SBW25).